The sequence spans 699 residues: Elongation factor G (699 aa).

Positions 8–287 (EKLRNIGIVA…AVIDYLPSPI (280 aa)) constitute a tr-type G domain. Residues 17 to 24 (AHIDAGKT), 85 to 89 (DTPGH), and 139 to 142 (NKMD) contribute to the GTP site.

It belongs to the TRAFAC class translation factor GTPase superfamily. Classic translation factor GTPase family. EF-G/EF-2 subfamily.

It is found in the cytoplasm. Functionally, catalyzes the GTP-dependent ribosomal translocation step during translation elongation. During this step, the ribosome changes from the pre-translocational (PRE) to the post-translocational (POST) state as the newly formed A-site-bound peptidyl-tRNA and P-site-bound deacylated tRNA move to the P and E sites, respectively. Catalyzes the coordinated movement of the two tRNA molecules, the mRNA and conformational changes in the ribosome. The polypeptide is Elongation factor G (fusA) (Aquifex aeolicus (strain VF5)).